We begin with the raw amino-acid sequence, 87 residues long: Signal recognition particle 19 kDa protein (87 aa).

The protein belongs to the SRP19 family. In terms of assembly, part of the signal recognition particle protein translocation system, which is composed of SRP and FtsY. Archaeal SRP consists of a 7S RNA molecule of 300 nucleotides and two protein subunits: SRP54 and SRP19.

It localises to the cytoplasm. Its function is as follows. Involved in targeting and insertion of nascent membrane proteins into the cytoplasmic membrane. Binds directly to 7S RNA and mediates binding of the 54 kDa subunit of the SRP. The chain is Signal recognition particle 19 kDa protein from Methanocaldococcus jannaschii (strain ATCC 43067 / DSM 2661 / JAL-1 / JCM 10045 / NBRC 100440) (Methanococcus jannaschii).